A 69-amino-acid polypeptide reads, in one-letter code: MNRKYNFNDESSMSPQAKAAMYAANKKSDARRRGKVGKEQWEKEMEQYNIQKAQFEKELKEKKEKELKK.

A disordered region spans residues 21-42; the sequence is MYAANKKSDARRRGKVGKEQWE. Residues 35–69 are a coiled coil; that stretch reads KVGKEQWEKEMEQYNIQKAQFEKELKEKKEKELKK.

This is an uncharacterized protein from Acheta domesticus (House cricket).